We begin with the raw amino-acid sequence, 230 residues long: Endonuclease NucS (230 aa).

The protein belongs to the NucS endonuclease family.

Its subcellular location is the cytoplasm. Functionally, cleaves both 3' and 5' ssDNA extremities of branched DNA structures. This Corynebacterium aurimucosum (strain ATCC 700975 / DSM 44827 / CIP 107346 / CN-1) (Corynebacterium nigricans) protein is Endonuclease NucS.